A 195-amino-acid chain; its full sequence is dITP/XTP pyrophosphatase (195 aa).

Substrate is bound at residue 8–13 (SNNQGK). Positions 39 and 68 each coordinate Mg(2+). Aspartate 68 acts as the Proton acceptor in catalysis. Substrate contacts are provided by residues serine 69, 149–152 (FGYD), lysine 172, and 177–178 (HR).

Belongs to the HAM1 NTPase family. As to quaternary structure, homodimer. Mg(2+) is required as a cofactor.

The enzyme catalyses XTP + H2O = XMP + diphosphate + H(+). The catalysed reaction is dITP + H2O = dIMP + diphosphate + H(+). It catalyses the reaction ITP + H2O = IMP + diphosphate + H(+). Its function is as follows. Pyrophosphatase that catalyzes the hydrolysis of nucleoside triphosphates to their monophosphate derivatives, with a high preference for the non-canonical purine nucleotides XTP (xanthosine triphosphate), dITP (deoxyinosine triphosphate) and ITP. Seems to function as a house-cleaning enzyme that removes non-canonical purine nucleotides from the nucleotide pool, thus preventing their incorporation into DNA/RNA and avoiding chromosomal lesions. This Staphylococcus aureus (strain Mu50 / ATCC 700699) protein is dITP/XTP pyrophosphatase.